A 794-amino-acid polypeptide reads, in one-letter code: Phenylalanine--tRNA ligase beta subunit (794 aa).

Residues 40–158 (NSLNSELVLG…LKKYLGKDVK (119 aa)) form the tRNA-binding domain. A B5 domain is found at 402–477 (KNKTEFEIKI…RLYSYDNIQE (76 aa)). Residues aspartate 455, aspartate 461, glutamate 464, and glutamate 465 each coordinate Mg(2+). Positions 702-794 (SKFQSSSRDL…NVKKMKVVIR (93 aa)) constitute an FDX-ACB domain.

It belongs to the phenylalanyl-tRNA synthetase beta subunit family. Type 1 subfamily. In terms of assembly, tetramer of two alpha and two beta subunits. Requires Mg(2+) as cofactor.

Its subcellular location is the cytoplasm. It catalyses the reaction tRNA(Phe) + L-phenylalanine + ATP = L-phenylalanyl-tRNA(Phe) + AMP + diphosphate + H(+). The protein is Phenylalanine--tRNA ligase beta subunit of Mycoplasma capricolum subsp. capricolum (strain California kid / ATCC 27343 / NCTC 10154).